A 102-amino-acid chain; its full sequence is Small ribosomal subunit protein uS10 (102 aa).

Belongs to the universal ribosomal protein uS10 family. As to quaternary structure, part of the 30S ribosomal subunit.

Involved in the binding of tRNA to the ribosomes. The chain is Small ribosomal subunit protein uS10 from Bartonella tribocorum (strain CIP 105476 / IBS 506).